Here is a 136-residue protein sequence, read N- to C-terminus: Small ribosomal subunit protein uS9 (136 aa).

The protein belongs to the universal ribosomal protein uS9 family.

This chain is Small ribosomal subunit protein uS9, found in Borrelia hermsii (strain HS1 / DAH).